A 182-amino-acid chain; its full sequence is uncharacterized protein (182 aa).

A signal peptide spans 1–26; the sequence is MIRALCTIVLIAAGVAVALYLSLVYG. The disordered stretch occupies residues 68–90; the sequence is YTERPYPVSSTQSPTTTQSPTTT. Positions 74 to 90 are enriched in low complexity; the sequence is PVSSTQSPTTTQSPTTT.

This is an uncharacterized protein from Dryophytes versicolor (chameleon treefrog).